A 208-amino-acid chain; its full sequence is ATP-dependent Clp protease proteolytic subunit (208 aa).

The active-site Nucleophile is serine 105. Histidine 130 is an active-site residue.

This sequence belongs to the peptidase S14 family. In terms of assembly, fourteen ClpP subunits assemble into 2 heptameric rings which stack back to back to give a disk-like structure with a central cavity, resembling the structure of eukaryotic proteasomes.

It is found in the cytoplasm. It carries out the reaction Hydrolysis of proteins to small peptides in the presence of ATP and magnesium. alpha-casein is the usual test substrate. In the absence of ATP, only oligopeptides shorter than five residues are hydrolyzed (such as succinyl-Leu-Tyr-|-NHMec, and Leu-Tyr-Leu-|-Tyr-Trp, in which cleavage of the -Tyr-|-Leu- and -Tyr-|-Trp bonds also occurs).. In terms of biological role, cleaves peptides in various proteins in a process that requires ATP hydrolysis. Has a chymotrypsin-like activity. Plays a major role in the degradation of misfolded proteins. The sequence is that of ATP-dependent Clp protease proteolytic subunit from Xylella fastidiosa (strain M23).